We begin with the raw amino-acid sequence, 69 residues long: Large ribosomal subunit protein bL28 (69 aa).

Belongs to the bacterial ribosomal protein bL28 family.

The polypeptide is Large ribosomal subunit protein bL28 (Nitratidesulfovibrio vulgaris (strain DSM 19637 / Miyazaki F) (Desulfovibrio vulgaris)).